A 210-amino-acid polypeptide reads, in one-letter code: MSSAKEIKKSILAPVLDNNPIALQVLGVCSALAVTTKLETAFVMTIAVMFVTALSNFFVSLIRNHIPNSVRIIVQMAIIASLVIVVDQVLKAYLYDISKQLSVFVGLIITNCIVMGRAEAFAMKSAPIPSFIDGLGNGLGYGFVLITVGFFRELLGSGKLFDMEVLPLVSNGGWYQPNGLMLLAPSAFFLIGFLIWAIRVFKPEQVEAKG.

6 helical membrane passes run 11–31 (ILAP…VCSA), 42–62 (FVMT…VSLI), 72–92 (IIVQ…VLKA), 103–123 (VFVG…AFAM), 131–151 (FIDG…VGFF), and 178–198 (NGLM…IWAI).

This sequence belongs to the NqrDE/RnfAE family. As to quaternary structure, composed of six subunits; NqrA, NqrB, NqrC, NqrD, NqrE and NqrF.

The protein resides in the cell inner membrane. The enzyme catalyses a ubiquinone + n Na(+)(in) + NADH + H(+) = a ubiquinol + n Na(+)(out) + NAD(+). NQR complex catalyzes the reduction of ubiquinone-1 to ubiquinol by two successive reactions, coupled with the transport of Na(+) ions from the cytoplasm to the periplasm. NqrA to NqrE are probably involved in the second step, the conversion of ubisemiquinone to ubiquinol. In Vibrio atlanticus (strain LGP32) (Vibrio splendidus (strain Mel32)), this protein is Na(+)-translocating NADH-quinone reductase subunit D.